The sequence spans 694 residues: Elongation factor G (694 aa).

Residues 8–287 (EDYRNFGIMA…AVVSYLPSPI (280 aa)) form the tr-type G domain. Residues 17-24 (AHIDAGKT), 86-90 (DTPGH), and 140-143 (NKMD) each bind GTP.

It belongs to the TRAFAC class translation factor GTPase superfamily. Classic translation factor GTPase family. EF-G/EF-2 subfamily.

The protein resides in the cytoplasm. Catalyzes the GTP-dependent ribosomal translocation step during translation elongation. During this step, the ribosome changes from the pre-translocational (PRE) to the post-translocational (POST) state as the newly formed A-site-bound peptidyl-tRNA and P-site-bound deacylated tRNA move to the P and E sites, respectively. Catalyzes the coordinated movement of the two tRNA molecules, the mRNA and conformational changes in the ribosome. This chain is Elongation factor G, found in Bartonella tribocorum (strain CIP 105476 / IBS 506).